The following is a 235-amino-acid chain: Orotidine 5'-phosphate decarboxylase (235 aa).

Substrate is bound by residues Asp-11, Lys-33, 60 to 69, Thr-119, Arg-180, Gln-189, Gly-209, and Arg-210; that span reads DLKFHDIPNT. Lys-62 acts as the Proton donor in catalysis.

It belongs to the OMP decarboxylase family. Type 1 subfamily. In terms of assembly, homodimer.

The enzyme catalyses orotidine 5'-phosphate + H(+) = UMP + CO2. Its pathway is pyrimidine metabolism; UMP biosynthesis via de novo pathway; UMP from orotate: step 2/2. Functionally, catalyzes the decarboxylation of orotidine 5'-monophosphate (OMP) to uridine 5'-monophosphate (UMP). This Alkalilimnicola ehrlichii (strain ATCC BAA-1101 / DSM 17681 / MLHE-1) protein is Orotidine 5'-phosphate decarboxylase.